A 1320-amino-acid chain; its full sequence is Collagen alpha-1(XX) chain (1320 aa).

An N-terminal signal peptide occupies residues 1–25 (MSLQGSYQHFCLWMFLGTTLALGQG). A Fibronectin type-III 1 domain is found at 27–118 (VSSRLRLAVL…EFVIEDLKSQ (92 aa)). Residues 177–352 (DIIFLVDGSW…DTLAPLLSRL (176 aa)) enclose the VWFA domain. Fibronectin type-III domains lie at 377–466 (TPTR…APLP), 467–556 (PPGP…SALG), 557–644 (PPRH…TQKA), 646–735 (SPGQ…TPSA), and 740–831 (PPSS…ACPA). A glycan (N-linked (GlcNAc...) asparagine) is linked at N433. N-linked (GlcNAc...) asparagine glycans are attached at residues N569 and N604. The segment at 728-752 (SLRYTPSAASRSPPSSLALSSETPN) is disordered. Positions 733 to 748 (PSAASRSPPSSLALSS) are enriched in low complexity. N-linked (GlcNAc...) asparagine glycosylation is present at N771. Residues 840-1035 (GFDLMVAFGL…LQMLQIVCSD (196 aa)) form the Laminin G-like domain. 2 disordered regions span residues 1064–1220 (YSSE…EKGE) and 1291–1320 (LRPE…ESLE). A compositionally biased stretch (pro residues) spans 1069–1080 (PGPPGPQGPPGL). Collagen-like domains are found at residues 1069 to 1122 (PGPP…TQGR), 1125 to 1174 (QGPM…GPAG), and 1165 to 1221 (GMRG…KGEP). Residues 1081–1093 (PGRNGPPGQQGHP) are compositionally biased toward low complexity. A compositionally biased stretch (gly residues) spans 1106–1115 (GPEGPGGQQG). The segment covering 1140–1152 (QGLSGLQGLSGQQ) has biased composition (low complexity). A compositionally biased stretch (polar residues) spans 1302 to 1320 (ISHTSNPRLQEVQTPESLE).

It is found in the secreted. The protein localises to the extracellular space. In terms of biological role, probable collagen protein. The protein is Collagen alpha-1(XX) chain (Col20a1) of Mus musculus (Mouse).